The primary structure comprises 1158 residues: ATP-dependent helicase/deoxyribonuclease subunit B (1158 aa).

One can recognise a UvrD-like helicase ATP-binding domain in the interval 1–275; the sequence is MTLHAYLGRA…QYFNQLYRFN (275 aa). An ATP-binding site is contributed by 8-15; the sequence is GRAGTGKS. The region spanning 269–583 is the UvrD-like helicase C-terminal domain; the sequence is NQLYRFNNQD…SIGTMDLAKV (315 aa). [4Fe-4S] cluster is bound by residues cysteine 784, cysteine 1112, cysteine 1115, and cysteine 1121.

This sequence belongs to the helicase family. AddB/RexB type 1 subfamily. As to quaternary structure, heterodimer of AddA and AddB. The cofactor is Mg(2+). [4Fe-4S] cluster is required as a cofactor.

The heterodimer acts as both an ATP-dependent DNA helicase and an ATP-dependent, dual-direction single-stranded exonuclease. Recognizes the chi site generating a DNA molecule suitable for the initiation of homologous recombination. The AddB subunit has 5' -&gt; 3' nuclease activity but not helicase activity. In Staphylococcus aureus (strain USA300), this protein is ATP-dependent helicase/deoxyribonuclease subunit B.